The chain runs to 639 residues: DNA primase (639 aa).

Residues 41 to 65 (CPFHNEKSPSFHVRPNHGHFHCFGC) form a CHC2-type zinc finger. A Toprim domain is found at 262–348 (HQAVVVEGYT…AGQSFVAVAP (87 aa)). Mg(2+) contacts are provided by glutamate 268, aspartate 319, and aspartate 321. Residues 460–479 (RAAQRPTAGPPTELAVRPDP) are disordered.

The protein belongs to the DnaG primase family. Monomer. Interacts with DnaB. Requires Zn(2+) as cofactor. It depends on Mg(2+) as a cofactor.

It carries out the reaction ssDNA + n NTP = ssDNA/pppN(pN)n-1 hybrid + (n-1) diphosphate.. Functionally, RNA polymerase that catalyzes the synthesis of short RNA molecules used as primers for DNA polymerase during DNA replication. The polypeptide is DNA primase (Mycobacterium bovis (strain ATCC BAA-935 / AF2122/97)).